A 471-amino-acid chain; its full sequence is Retinoic acid receptor RXR-beta-A (471 aa).

The tract at residues 1–34 (MGDSRDSRSPDSSSVSSPPSGQRSPPLAPSAAAM) is disordered. The tract at residues 1-102 (MGDSRDSRSP…HAVSSSDDVK (102 aa)) is modulating. The segment covering 10–25 (PDSSSVSSPPSGQRSP) has biased composition (low complexity). Positions 122 to 197 (KRLCAICGDR…MGMKREVVQD (76 aa)) form a DNA-binding region, nuclear receptor. 2 NR C4-type zinc fingers span residues 125–145 (CAIC…CEGC) and 161–185 (CRDN…YQKC). The segment covering 196–216 (QDERQRSVQEERQRNKERDGE) has biased composition (basic and acidic residues). The tract at residues 196 to 226 (QDERQRSVQEERQRNKERDGEVESSSAANEE) is disordered. Residues 198 to 221 (ERQRSVQEERQRNKERDGEVESSS) form a hinge region. Residues 224-467 (NEEMPVEKIL…TFLMEMLEAP (244 aa)) form the NR LBD domain.

Belongs to the nuclear hormone receptor family. NR2 subfamily. Homodimer. Heterodimer; with a rar molecule. Binds DNA preferentially as a rar/rxr heterodimer. Heterodimerizes with rarga. In terms of tissue distribution, shows uniform expression from the blastula to mid-gastrula stages. At 12 hours post-fertilization (hpf), expressed ubiquitously but more weakly. At 24 hpf, restricted to the ventral diencephalon, pharangeal endoderm and trunk and tail mesoderm; mesoderm expression is in medial cells of each somite along the dorsoventral axis, forming stripes. At 48 hpf, expressed in forebrain, eye, midbrain and anterior hindbrain.

The protein resides in the nucleus. In terms of biological role, receptor for retinoic acid. Retinoic acid receptors bind as heterodimers to their target response elements in response to their ligands, all-trans or 9-cis retinoic acid, and regulate gene expression in various biological processes. The rar/rxr heterodimers bind to the retinoic acid response elements (RARE) composed of tandem 5'-AGGTCA-3' sites known as DR1-DR5. The high affinity ligand for rxrs is 9-cis retinoic acid. This chain is Retinoic acid receptor RXR-beta-A (rxrba), found in Danio rerio (Zebrafish).